Reading from the N-terminus, the 1360-residue chain is Ubiquitin carboxyl-terminal hydrolase 19 (1360 aa).

A disordered region spans residues 1–46 (MSAGASATGPRRGPPGLEEATSKKKQKDRANLESKDGDARRVSLPR). The Cytoplasmic portion of the chain corresponds to 1-1333 (MSAGASATGP…TTPDEGCLRY (1333 aa)). Residues 28 to 46 (DRANLESKDGDARRVSLPR) show a composition bias toward basic and acidic residues. A CS 1 domain is found at 51-140 (KDELLLDWRQ…VPLLTWPSLL (90 aa)). Residues 163 to 239 (PIALEPGSEP…APSFLSDSAT (77 aa)) are disordered. Over residues 170 to 181 (SEPRRAKQEARN) the composition is skewed to basic and acidic residues. Residues 189 to 199 (GEVGSGAGPGT) show a composition bias toward gly residues. Residue Ser220 is modified to Phosphoserine. Residues 322-424 (LAFVKNDSYE…RQSQRWGGLE (103 aa)) enclose the CS 2 domain. Positions 432-482 (VGGAKVAVPTGPTPLDSTPPGGGPHPLTGQEEARAVEKEKPKARSEDSGLD) are disordered. Over residues 462–478 (EEARAVEKEKPKARSED) the composition is skewed to basic and acidic residues. Positions 539–1256 (TGLVNLGNTC…YAYVLFYRRR (718 aa)) constitute a USP domain. The active-site Nucleophile is Cys548. Residues Cys833, Cys836, Cys850, Cys853, Cys859, Cys863, His871, and Cys875 each coordinate Zn(2+). An MYND-type zinc finger spans residues 833–875 (CAACQRKQQSEEEKLKRCTRCYRVGYCNQFCQKTHWPDHKGLC). The tract at residues 965–988 (DTGAHRVWPPADRGPVPSTSGLSS) is disordered. His1207 serves as the catalytic Proton acceptor. Positions 1259–1274 (PVERPPRASHSEHHPD) are enriched in basic and acidic residues. The disordered stretch occupies residues 1259–1281 (PVERPPRASHSEHHPDLGPAAEA). Residues 1334–1354 (FVLGTVAALVALVLNVFYPLV) form a helical membrane-spanning segment. The Lumenal portion of the chain corresponds to 1355–1360 (SQSRWR).

Interacts with RNF123. Interacts with BIRC2/c-IAP1, BIRC3/c-IAP2 and XIAP/BIRC4. Interacts with HIF1A (via N-terminus).

The protein resides in the endoplasmic reticulum membrane. The enzyme catalyses Thiol-dependent hydrolysis of ester, thioester, amide, peptide and isopeptide bonds formed by the C-terminal Gly of ubiquitin (a 76-residue protein attached to proteins as an intracellular targeting signal).. In terms of biological role, deubiquitinating enzyme that regulates the degradation of various proteins by removing ubiquitin moieties, thereby preventing their proteasomal degradation. Stabilizes RNF123, which promotes CDKN1B degradation and contributes to cell proliferation. Decreases the levels of ubiquitinated proteins during skeletal muscle formation and acts to repress myogenesis. Modulates transcription of major myofibrillar proteins. Also involved in turnover of endoplasmic-reticulum-associated degradation (ERAD) substrates. Mechanistically, deubiquitinates and thereby stabilizes several E3 ligases involved in the ERAD pathway including SYVN1 or MARCHF6. Regulates the stability of other E3 ligases including BIRC2/c-IAP1 and BIRC3/c-IAP2 by preventing their ubiquitination. Required for cells to mount an appropriate response to hypoxia by rescuing HIF1A from degradation in a non-catalytic manner and by mediating the deubiquitination of FUNDC1. Attenuates mitochondrial damage and ferroptosis by targeting and stabilizing NADPH oxidase 4/NOX4. Negatively regulates TNF-alpha- and IL-1beta-triggered NF-kappa-B activation by hydrolyzing 'Lys-27'- and 'Lys-63'-linked polyubiquitin chains from MAP3K7. Modulates also the protein level and aggregation of polyQ-expanded huntingtin/HTT through HSP90AA1. The polypeptide is Ubiquitin carboxyl-terminal hydrolase 19 (Usp19) (Mus musculus (Mouse)).